Here is a 346-residue protein sequence, read N- to C-terminus: DNA-directed RNA polymerase subunit alpha (346 aa).

The tract at residues 1 to 233 is alpha N-terminal domain (alpha-NTD); that stretch reads MLRDEVAVSA…DLFIPFLHAE (233 aa). The tract at residues 268-346 is alpha C-terminal domain (alpha-CTD); it reads IELKCIFIDQ…NKFLIGNPSE (79 aa).

Belongs to the RNA polymerase alpha chain family. In terms of assembly, in plastids the minimal PEP RNA polymerase catalytic core is composed of four subunits: alpha, beta, beta', and beta''. When a (nuclear-encoded) sigma factor is associated with the core the holoenzyme is formed, which can initiate transcription.

It localises to the plastid. It is found in the chloroplast. The enzyme catalyses RNA(n) + a ribonucleoside 5'-triphosphate = RNA(n+1) + diphosphate. In terms of biological role, DNA-dependent RNA polymerase catalyzes the transcription of DNA into RNA using the four ribonucleoside triphosphates as substrates. The polypeptide is DNA-directed RNA polymerase subunit alpha (Ranunculus macranthus (Large buttercup)).